We begin with the raw amino-acid sequence, 456 residues long: RNA polymerase II-associated protein 1 homolog (456 aa).

The interval 382–456 (LRSVEGSLNE…PVEQLQNEED (75 aa)) is disordered. Ser388 is subject to Phosphoserine. A compositionally biased stretch (basic and acidic residues) spans 396 to 406 (EEKPAESREQL). Polar residues-rich tracts occupy residues 408-433 (SAEQ…QANS) and 441-456 (GNTQ…NEED).

This sequence belongs to the PAF1 family.

It is found in the cytoplasm. The protein resides in the nucleus. The sequence is that of RNA polymerase II-associated protein 1 homolog from Schizosaccharomyces pombe (strain 972 / ATCC 24843) (Fission yeast).